A 364-amino-acid polypeptide reads, in one-letter code: Nuclear hormone receptor family member nhr-53 (364 aa).

A DNA-binding region (nuclear receptor) is located at residues 20 to 95; it reads PSYCLICCEV…VGMQRSSVQQ (76 aa). NR C4-type zinc fingers lie at residues 23–43 and 59–83; these read CLIC…CRAC and CPKN…YEKC. The NR LBD domain occupies 110–363; the sequence is REEPVLDTMR…KNLYDMFSPT (254 aa).

This sequence belongs to the nuclear hormone receptor family.

The protein localises to the nucleus. In terms of biological role, orphan nuclear receptor. In Caenorhabditis elegans, this protein is Nuclear hormone receptor family member nhr-53 (nhr-53).